We begin with the raw amino-acid sequence, 132 residues long: Small ribosomal subunit protein uS8 (132 aa).

Belongs to the universal ribosomal protein uS8 family. In terms of assembly, part of the 30S ribosomal subunit. Contacts proteins S5 and S12.

Its function is as follows. One of the primary rRNA binding proteins, it binds directly to 16S rRNA central domain where it helps coordinate assembly of the platform of the 30S subunit. In Bradyrhizobium sp. (strain BTAi1 / ATCC BAA-1182), this protein is Small ribosomal subunit protein uS8.